The primary structure comprises 112 residues: Large ribosomal subunit protein bL17 (112 aa).

Belongs to the bacterial ribosomal protein bL17 family. As to quaternary structure, part of the 50S ribosomal subunit. Contacts protein L32.

The polypeptide is Large ribosomal subunit protein bL17 (Desulforamulus reducens (strain ATCC BAA-1160 / DSM 100696 / MI-1) (Desulfotomaculum reducens)).